A 343-amino-acid chain; its full sequence is WAT1-related protein At1g43650 (343 aa).

10 helical membrane passes run 9–29, 36–56, 65–85, 98–118, 130–150, 175–195, 209–229, 239–259, 272–292, and 296–316; these read MAMV…KVAI, FVFV…FAFF, LSFI…TLSL, TFAA…ALLF, GVAK…FAFV, SVKG…WIIM, LVAL…VAVN, FGLP…LTYW, FTAL…SFLF, and FYLG…LGLW. 2 EamA domains span residues 16 to 139 and 188 to 313; these read IVYA…GSMV and CWCL…GLYL.

Belongs to the drug/metabolite transporter (DMT) superfamily. Plant drug/metabolite exporter (P-DME) (TC 2.A.7.4) family.

Its subcellular location is the membrane. The polypeptide is WAT1-related protein At1g43650 (Arabidopsis thaliana (Mouse-ear cress)).